The sequence spans 694 residues: Elongation factor G (694 aa).

The tr-type G domain maps to 6-288; sequence KLYRNIGIAA…GVIEYLPSPT (283 aa). GTP is bound by residues 15-22, 86-90, and 140-143; these read AHVDAGKT, DTPGH, and NKMD.

It belongs to the TRAFAC class translation factor GTPase superfamily. Classic translation factor GTPase family. EF-G/EF-2 subfamily.

It localises to the cytoplasm. Functionally, catalyzes the GTP-dependent ribosomal translocation step during translation elongation. During this step, the ribosome changes from the pre-translocational (PRE) to the post-translocational (POST) state as the newly formed A-site-bound peptidyl-tRNA and P-site-bound deacylated tRNA move to the P and E sites, respectively. Catalyzes the coordinated movement of the two tRNA molecules, the mRNA and conformational changes in the ribosome. The protein is Elongation factor G of Legionella pneumophila (strain Corby).